The primary structure comprises 142 residues: MYHGNAHRRFGRTHEHRKAMFANMCQALIKHEQIVTTLPKAKDLRPVVEKLVTLGKRGDLHARRQAIAQIKDVALVGKLFAVLGPRYKERHGGYTRVLKAGFRYGDNAPMAVIEFVDRDVDAKGKDSGPVFGADQDEAALAS.

It belongs to the bacterial ribosomal protein bL17 family. Part of the 50S ribosomal subunit. Contacts protein L32.

The sequence is that of Large ribosomal subunit protein bL17 from Methylocella silvestris (strain DSM 15510 / CIP 108128 / LMG 27833 / NCIMB 13906 / BL2).